Consider the following 127-residue polypeptide: Large ribosomal subunit protein bL17 (127 aa).

This sequence belongs to the bacterial ribosomal protein bL17 family. As to quaternary structure, part of the 50S ribosomal subunit. Contacts protein L32.

This chain is Large ribosomal subunit protein bL17, found in Stenotrophomonas maltophilia (strain K279a).